The chain runs to 79 residues: Sulfur carrier protein TusA (79 aa).

Catalysis depends on Cys-17, which acts as the Cysteine persulfide intermediate.

It belongs to the sulfur carrier protein TusA family.

It is found in the cytoplasm. Its function is as follows. Sulfur carrier protein which probably makes part of a sulfur-relay system. This is Sulfur carrier protein TusA from Haemophilus influenzae (strain PittEE).